The following is a 295-amino-acid chain: UDP-N-acetylenolpyruvoylglucosamine reductase (295 aa).

An FAD-binding PCMH-type domain is found at 24-188 (KVGGNAEIFF…LKVVFKINKG (165 aa)). Arg168 is an active-site residue. Ser217 (proton donor) is an active-site residue. Residue Glu287 is part of the active site.

This sequence belongs to the MurB family. FAD is required as a cofactor.

The protein resides in the cytoplasm. The catalysed reaction is UDP-N-acetyl-alpha-D-muramate + NADP(+) = UDP-N-acetyl-3-O-(1-carboxyvinyl)-alpha-D-glucosamine + NADPH + H(+). It participates in cell wall biogenesis; peptidoglycan biosynthesis. Its function is as follows. Cell wall formation. The sequence is that of UDP-N-acetylenolpyruvoylglucosamine reductase from Rickettsia peacockii (strain Rustic).